A 468-amino-acid polypeptide reads, in one-letter code: UDP-N-acetylmuramate--L-alanine ligase (468 aa).

122–128 (GSHGKTT) contributes to the ATP binding site.

The protein belongs to the MurCDEF family.

The protein localises to the cytoplasm. It catalyses the reaction UDP-N-acetyl-alpha-D-muramate + L-alanine + ATP = UDP-N-acetyl-alpha-D-muramoyl-L-alanine + ADP + phosphate + H(+). It participates in cell wall biogenesis; peptidoglycan biosynthesis. Functionally, cell wall formation. This is UDP-N-acetylmuramate--L-alanine ligase from Synechococcus sp. (strain CC9902).